The primary structure comprises 90 residues: Mitochondrial import inner membrane translocase subunit Tim10 (90 aa).

Residues 29-54 carry the Twin CX3C motif motif; sequence CHRKCVPPHYKEAELSKGESVCLDRC. 2 cysteine pairs are disulfide-bonded: Cys-29/Cys-54 and Cys-33/Cys-50.

Belongs to the small Tim family. As to quaternary structure, heterohexamer; composed of 3 copies of TIMM9 and 3 copies of TIMM10/TIM10A, named soluble 70 kDa complex. The complex forms a 6-bladed alpha-propeller structure and associates with the TIMM22 component of the TIM22 complex. Interacts with multi-pass transmembrane proteins in transit. Also forms a complex composed of TIMM9, TIMM10/TIM10A and FXC1/TIM10B.

It is found in the mitochondrion inner membrane. Functionally, mitochondrial intermembrane chaperone that participates in the import and insertion of multi-pass transmembrane proteins into the mitochondrial inner membrane. May also be required for the transfer of beta-barrel precursors from the TOM complex to the sorting and assembly machinery (SAM complex) of the outer membrane. Acts as a chaperone-like protein that protects the hydrophobic precursors from aggregation and guide them through the mitochondrial intermembrane space. This chain is Mitochondrial import inner membrane translocase subunit Tim10 (Timm10), found in Rattus norvegicus (Rat).